Consider the following 309-residue polypeptide: Glutaminase (309 aa).

Ser64, Asn114, Glu160, Asn167, Tyr191, Tyr243, and Val261 together coordinate substrate.

This sequence belongs to the glutaminase family. As to quaternary structure, homotetramer.

It catalyses the reaction L-glutamine + H2O = L-glutamate + NH4(+). This is Glutaminase from Methylorubrum extorquens (strain PA1) (Methylobacterium extorquens).